We begin with the raw amino-acid sequence, 144 residues long: D-aminoacyl-tRNA deacylase (144 aa).

The short motif at 136-137 (GP) is the Gly-cisPro motif, important for rejection of L-amino acids element.

It belongs to the DTD family. In terms of assembly, homodimer.

It localises to the cytoplasm. The enzyme catalyses glycyl-tRNA(Ala) + H2O = tRNA(Ala) + glycine + H(+). The catalysed reaction is a D-aminoacyl-tRNA + H2O = a tRNA + a D-alpha-amino acid + H(+). Functionally, an aminoacyl-tRNA editing enzyme that deacylates mischarged D-aminoacyl-tRNAs. Also deacylates mischarged glycyl-tRNA(Ala), protecting cells against glycine mischarging by AlaRS. Acts via tRNA-based rather than protein-based catalysis; rejects L-amino acids rather than detecting D-amino acids in the active site. By recycling D-aminoacyl-tRNA to D-amino acids and free tRNA molecules, this enzyme counteracts the toxicity associated with the formation of D-aminoacyl-tRNA entities in vivo and helps enforce protein L-homochirality. In Haemophilus influenzae (strain ATCC 51907 / DSM 11121 / KW20 / Rd), this protein is D-aminoacyl-tRNA deacylase.